A 553-amino-acid chain; its full sequence is Hydroxylamine reductase (553 aa).

Residues Cys3, Cys6, Cys18, and Cys25 each contribute to the [2Fe-2S] cluster site. Hybrid [4Fe-2O-2S] cluster contacts are provided by His252, Glu276, Cys320, Cys408, Cys436, Cys461, Glu495, and Lys497. Cys408 bears the Cysteine persulfide mark.

This sequence belongs to the HCP family. [2Fe-2S] cluster is required as a cofactor. The cofactor is hybrid [4Fe-2O-2S] cluster.

The protein localises to the cytoplasm. It catalyses the reaction A + NH4(+) + H2O = hydroxylamine + AH2 + H(+). In terms of biological role, catalyzes the reduction of hydroxylamine to form NH(3) and H(2)O. In Aliivibrio fischeri (strain ATCC 700601 / ES114) (Vibrio fischeri), this protein is Hydroxylamine reductase.